The sequence spans 419 residues: MGQFLIQGGCQLKGEVTISGAKNAALPILFASLLSKGNVNLTNVPLLKDISTTLELLKELGAEASQDGHEVHINASSVKNYTASYELVRSMRASILALGPLVARFGEADISLPGGCAIGARPVNLHIHGLEQMGAIIKVQNGFIKARVNGRLKGAHLYMDMVSVTGTGNLMMAAALAEGVTTIENAAKEPELVDLANFINGMGGKISGAGTDTLTIEGVESLGDCSYQVQPDRIETGTFLVAGVVSGGKVKCLKTAPHLLTAVLSKLEEAGAAVTTGSDWIEVDMIDRQLKSVNISTAPHPAFPTDMQAQFTVLNTVAPGTGRIKENIFENRFMHVPELQRMGANIILEGNLAICGDPDPLCGAEVMATDLRASASLVIAGLIAEGETIVDEIYHIDRGYEAIENKLIALGAKIKRIEN.

22-23 (KN) contributes to the phosphoenolpyruvate binding site. UDP-N-acetyl-alpha-D-glucosamine is bound at residue arginine 92. Catalysis depends on cysteine 116, which acts as the Proton donor. Position 116 is a 2-(S-cysteinyl)pyruvic acid O-phosphothioketal (cysteine 116). 2 residues coordinate UDP-N-acetyl-alpha-D-glucosamine: aspartate 306 and isoleucine 328.

Belongs to the EPSP synthase family. MurA subfamily.

The protein resides in the cytoplasm. The catalysed reaction is phosphoenolpyruvate + UDP-N-acetyl-alpha-D-glucosamine = UDP-N-acetyl-3-O-(1-carboxyvinyl)-alpha-D-glucosamine + phosphate. It functions in the pathway cell wall biogenesis; peptidoglycan biosynthesis. Its function is as follows. Cell wall formation. Adds enolpyruvyl to UDP-N-acetylglucosamine. In Psychromonas ingrahamii (strain DSM 17664 / CCUG 51855 / 37), this protein is UDP-N-acetylglucosamine 1-carboxyvinyltransferase.